We begin with the raw amino-acid sequence, 349 residues long: Isopentenyl-diphosphate delta-isomerase (349 aa).

7–8 contacts substrate; that stretch reads RK. FMN-binding positions include Ser65, 66-68, Ser96, and Asn124; that span reads SMT. Position 96–98 (96–98) interacts with substrate; it reads SQR. Gln159 is a substrate binding site. Glu160 is a Mg(2+) binding site. FMN is bound by residues Lys191, Thr221, 271–273, and 292–293; these read GIR and AA.

It belongs to the IPP isomerase type 2 family. In terms of assembly, homooctamer. Dimer of tetramers. FMN is required as a cofactor. NADPH serves as cofactor. The cofactor is Mg(2+).

Its subcellular location is the cytoplasm. The enzyme catalyses isopentenyl diphosphate = dimethylallyl diphosphate. Involved in the biosynthesis of isoprenoids. Catalyzes the 1,3-allylic rearrangement of the homoallylic substrate isopentenyl (IPP) to its allylic isomer, dimethylallyl diphosphate (DMAPP). This is Isopentenyl-diphosphate delta-isomerase from Synechocystis sp. (strain ATCC 27184 / PCC 6803 / Kazusa).